The following is a 1538-amino-acid chain: Arf-GAP with Rho-GAP domain, ANK repeat and PH domain-containing protein 3 (1538 aa).

Positions Pro-4 to Glu-68 constitute an SAM domain. Disordered stretches follow at residues Asp-72–Lys-97, Ser-125–Asn-149, and Ala-215–Gly-242. The span at Thr-82–Lys-97 shows a compositional bias: pro residues. Residues Ser-216 to Ala-241 are compositionally biased toward basic and acidic residues. PH domains are found at residues Val-282–Lys-374 and Arg-389–Thr-478. The Arf-GAP domain occupies Glu-479–Pro-606. 2 consecutive PH domains span residues Ala-671 to Leu-785 and Leu-795 to Gly-901. A Rho-GAP domain is found at Thr-903–Phe-1084. Residues Gly-1113–Met-1206 enclose the Ras-associating domain. Positions Glu-1219 to His-1321 constitute a PH 5 domain. A Phosphothreonine modification is found at Thr-1344. Tyr-1399 and Tyr-1404 each carry phosphotyrosine. Polar residues predominate over residues Trp-1425 to Phe-1439. Residues Trp-1425–Thr-1538 are disordered. Phosphoserine is present on residues Ser-1438 and Ser-1474. 2 stretches are compositionally biased toward low complexity: residues Glu-1476–Leu-1486 and Ala-1494–Ser-1505. Residues Pro-1506 to Ser-1529 show a composition bias toward pro residues.

As to quaternary structure, interacts (via SAM domain) with INPPL1/SHIP2. Post-translationally, tyrosine phosphorylated at a low basal level. PDGF treatment stimulates phosphorylation. Tyrosine phosphorylation is increased in cells that are in the process of becoming attached to a substrate and that start spreading and flattening.

The protein localises to the cytoplasm. It localises to the cell membrane. It is found in the cytoskeleton. The protein resides in the cell projection. Its subcellular location is the lamellipodium. The protein localises to the ruffle. Functionally, phosphatidylinositol 3,4,5-trisphosphate-dependent GTPase-activating protein that modulates actin cytoskeleton remodeling by regulating ARF and RHO family members. Is activated by phosphatidylinositol 3,4,5-trisphosphate (PtdIns(3,4,5)P3) binding. Can be activated by phosphatidylinositol 3,4-bisphosphate (PtdIns(3,4,5)P2) binding, albeit with lower efficiency. Acts preferentially on ARF5 and on RHOA. The polypeptide is Arf-GAP with Rho-GAP domain, ANK repeat and PH domain-containing protein 3 (Arap3) (Mus musculus (Mouse)).